We begin with the raw amino-acid sequence, 151 residues long: uncharacterized protein (151 aa).

Residues 35–147 (GIFENERQKL…RETLQESLED (113 aa)) adopt a coiled-coil conformation.

This is an uncharacterized protein from Helicobacter hepaticus (strain ATCC 51449 / 3B1).